A 602-amino-acid polypeptide reads, in one-letter code: General amino-acid permease GAP1 (602 aa).

Residues 1–95 (MSNTSSYEKN…LKHHLKNRHL (95 aa)) lie on the Cytoplasmic side of the membrane. Residue Lys76 forms a Glycyl lysine isopeptide (Lys-Gly) (interchain with G-Cter in ubiquitin) linkage. A helical transmembrane segment spans residues 96–116 (QMIAIGGAIGTGLLVGSGTAL). Topologically, residues 117 to 121 (RTGGP) are extracellular. The helical transmembrane segment at 122–142 (ASLLIGWGSTGTMIYAMVMAL) threads the bilayer. The Cytoplasmic segment spans residues 143-165 (GELAVIFPISGGFTTYATRFIDE). Residues 166-185 (SFGYANNFNYMLQWLVVLPL) form a helical membrane-spanning segment. Over 186 to 204 (EIVSASITVNFWGTDPKYR) the chain is Extracellular. Residues 205-224 (DGFVALFWLAIVIINMFGVK) form a helical membrane-spanning segment. Residues 225–237 (GYGEAEFVFSFIK) are Cytoplasmic-facing. A helical membrane pass occupies residues 238-256 (VITVVGFIILGIILNCGGG). Residues 257-280 (PTGGYIGGKYWHDPGAFAGDTPGA) are Extracellular-facing. A helical transmembrane segment spans residues 281-298 (KFKGVCSVFVTAAFSFAG). Topologically, residues 299 to 321 (SELVGLAASESVEPRKSVPKAAK) are cytoplasmic. The chain crosses the membrane as a helical span at residues 322-342 (QVFWRITLFYILSLLMIGLLV). Residues 343-376 (PYNDKSLIGASSVDAAASPFVIAIKTHGIKGLPS) lie on the Extracellular side of the membrane. A helical transmembrane segment spans residues 377 to 396 (VVNVVILIAVLSVGNSAIYA). The Cytoplasmic portion of the chain corresponds to 397-421 (CSRTMVALAEQRFLPEIFSYVDRKG). The helical transmembrane segment at 422 to 442 (RPLVGIAVTSAFGLIAFVAAS) threads the bilayer. At 443-451 (KKEGEVFNW) the chain is on the extracellular side. The helical transmembrane segment at 452–472 (LLALSGLSSLFTWGGICICHI) threads the bilayer. Residues 473–491 (RFRKALAAQGRGLDELSFK) lie on the Cytoplasmic side of the membrane. A helical transmembrane segment spans residues 492 to 510 (SPTGVWGSYWGLFMVIIMF). Over 511–529 (IAQFYVAVFPVGDSPSAEG) the chain is Extracellular. A helical transmembrane segment spans residues 530-548 (FFEAYLSFPLVMVMYIGHK). Residues 549–602 (IYKRNWKLFIPAEKMDIDTGRREVDLDLLKQEIAEEKAIMATKPRWYRIWNFWC) are Cytoplasmic-facing.

Belongs to the amino acid-polyamine-organocation (APC) superfamily. YAT (TC 2.A.3.10) family. Active permease is phosphorylated. The addition of glutamine causes rapid dephosphorylation and inactivation of the permease. In terms of processing, ubiquitination by RSP5 and the RSP5-associated proteins BUL1 and BUL2, leads the addition of poly-ubiquitin chains being specifically formed by linkage through the lysine 63 residue of ubiquitin and mediates ammonium-induced endocytosis and degradation in the vacuole.

The protein localises to the cell membrane. It localises to the endoplasmic reticulum membrane. In terms of biological role, general amino-acid permease involved in the uptake of all the naturally occurring L-amino-acids, related compounds such as ornithine and citrulline, some D-amino acids, toxic amino acid analogs such as azetidine-2-carboxylate, and the polyamines putrescine and spermidine. Senses its transport substrates to set an appropriate level of transporter activity at the cell surface. Required for FLO11 expression and invasive growth. This Saccharomyces cerevisiae (strain ATCC 204508 / S288c) (Baker's yeast) protein is General amino-acid permease GAP1.